The primary structure comprises 268 residues: Tetratricopeptide repeat protein 33 (268 aa).

Residues Val14–Val34 form a disordered region. The segment covering Gln24–Val34 has biased composition (acidic residues). 3 TPR repeats span residues Ser60 to Asp93, Ala94 to Trp127, and Trp128 to Glu161. Residues Glu249–Leu268 form a disordered region.

The sequence is that of Tetratricopeptide repeat protein 33 (ttc33) from Danio rerio (Zebrafish).